The following is a 102-amino-acid chain: Small ribosomal subunit protein uS10 (102 aa).

Belongs to the universal ribosomal protein uS10 family. Part of the 30S ribosomal subunit.

Functionally, involved in the binding of tRNA to the ribosomes. In Syntrophotalea carbinolica (strain DSM 2380 / NBRC 103641 / GraBd1) (Pelobacter carbinolicus), this protein is Small ribosomal subunit protein uS10.